A 576-amino-acid polypeptide reads, in one-letter code: Periodic tryptophan protein 1 (576 aa).

Residues 41-134 (AKATLEEAEG…LPNQEDSQEE (94 aa)) are disordered. Acidic residues-rich tracts occupy residues 46-58 (EEAE…EDDA) and 71-91 (DIDD…EIAD). Serine 52 bears the Phosphoserine mark. Residues 108–120 (SDVKFHEGEKGED) show a composition bias toward basic and acidic residues. Phosphoserine is present on serine 131. WD repeat units follow at residues 207–252 (AFPL…KAFP), 284–324 (HHTD…AARS), 329–369 (HSNK…ESQM), 376–414 (MAGE…NRKP), 420–461 (AHDA…ATNT), and 472–514 (FDVG…SVRK). Residues 530–576 (EAQKIGKSSRIARKYTSNDNPDTVITIDDQGEDEEEREGGDEHDDMA) are disordered. The span at 558–576 (DQGEDEEEREGGDEHDDMA) shows a compositional bias: acidic residues.

It belongs to the WD repeat PWP1 family.

This Saccharomyces cerevisiae (strain ATCC 204508 / S288c) (Baker's yeast) protein is Periodic tryptophan protein 1 (PWP1).